The primary structure comprises 357 residues: Sorbitol dehydrogenase (357 aa).

At A2 the chain carries N-acetylalanine. Residue C45 coordinates Zn(2+). Y51 contributes to the substrate binding site. Residues H70 and E71 each contribute to the Zn(2+) site. E156 contributes to the substrate binding site. I184, D204, and R209 together coordinate NAD(+). Phosphoserine occurs at positions 211 and 225. NAD(+)-binding positions include 273–275 and 297–299; these read VGL and VFR. Substrate-binding residues include R299 and Y300.

Belongs to the zinc-containing alcohol dehydrogenase family. As to quaternary structure, homotetramer. The cofactor is Zn(2+). Expressed in liver. Expressed in kidney and epithelial cells of both benign and malignant prostate tissue. Expressed in epididymis (at protein level).

The protein resides in the mitochondrion membrane. Its subcellular location is the cell projection. The protein localises to the cilium. It is found in the flagellum. It catalyses the reaction keto-D-fructose + NADH + H(+) = D-sorbitol + NAD(+). The enzyme catalyses L-threitol + NAD(+) = L-erythrulose + NADH + H(+). It carries out the reaction xylitol + NAD(+) = D-xylulose + NADH + H(+). The catalysed reaction is ribitol + NAD(+) = D-ribulose + NADH + H(+). It catalyses the reaction (R,R)-butane-2,3-diol + NAD(+) = (R)-acetoin + NADH + H(+). The enzyme catalyses L-iditol + NAD(+) = keto-L-sorbose + NADH + H(+). Inhibited by CP-166,572, an inhibitor that is competitive with fructose. Also competitively inhibited by phenanthroline and 4-methylpyrazole in vitro. Its function is as follows. Polyol dehydrogenase that catalyzes the reversible NAD(+)-dependent oxidation of various sugar alcohols. Is mostly active with D-sorbitol (D-glucitol), L-threitol, xylitol and ribitol as substrates, leading to the C2-oxidized products D-fructose, L-erythrulose, D-xylulose, and D-ribulose, respectively. Is a key enzyme in the polyol pathway that interconverts glucose and fructose via sorbitol, which constitutes an important alternate route for glucose metabolism. The polyol pathway is believed to be involved in the etiology of diabetic complications, such as diabetic neuropathy and retinopathy, induced by hyperglycemia. May play a role in sperm motility by using sorbitol as an alternative energy source for sperm motility. May have a more general function in the metabolism of secondary alcohols since it also catalyzes the stereospecific oxidation of (2R,3R)-2,3-butanediol. To a lesser extent, can also oxidize L-arabinitol, galactitol and D-mannitol and glycerol in vitro. Oxidizes neither ethanol nor other primary alcohols. Cannot use NADP(+) as the electron acceptor. The sequence is that of Sorbitol dehydrogenase (SORD) from Homo sapiens (Human).